Reading from the N-terminus, the 598-residue chain is Urease subunit alpha (598 aa).

Ni(2+) is bound by residues H141, H143, and K223. At K223 the chain carries N6-carboxylysine. Residue H225 coordinates substrate. The Ni(2+) site is built by H252 and H278. Residue H326 is the Proton donor of the active site. D366 provides a ligand contact to Ni(2+).

It belongs to the metallo-dependent hydrolases superfamily. Urease alpha subunit family. Heterotrimer of UreA (gamma), UreB (beta) and UreC (alpha) subunits. Three heterotrimers associate to form the active enzyme. Ni cation serves as cofactor. Carboxylation allows a single lysine to coordinate two nickel ions.

It localises to the cytoplasm. It carries out the reaction urea + 2 H2O + H(+) = hydrogencarbonate + 2 NH4(+). Its pathway is nitrogen metabolism; urea degradation; CO(2) and NH(3) from urea (urease route): step 1/1. The protein is Urease subunit alpha of Ureaplasma parvum serovar 3 (strain ATCC 27815 / 27 / NCTC 11736).